The following is a 277-amino-acid chain: Hydroxyethylthiazole kinase (277 aa).

Methionine 56 lines the substrate pocket. The ATP site is built by arginine 131 and threonine 177. Alanine 204 is a substrate binding site.

The protein belongs to the Thz kinase family. The cofactor is Mg(2+).

The enzyme catalyses 5-(2-hydroxyethyl)-4-methylthiazole + ATP = 4-methyl-5-(2-phosphooxyethyl)-thiazole + ADP + H(+). It functions in the pathway cofactor biosynthesis; thiamine diphosphate biosynthesis; 4-methyl-5-(2-phosphoethyl)-thiazole from 5-(2-hydroxyethyl)-4-methylthiazole: step 1/1. Its function is as follows. Catalyzes the phosphorylation of the hydroxyl group of 4-methyl-5-beta-hydroxyethylthiazole (THZ). The sequence is that of Hydroxyethylthiazole kinase from Gemmatimonas aurantiaca (strain DSM 14586 / JCM 11422 / NBRC 100505 / T-27).